Here is a 311-residue protein sequence, read N- to C-terminus: HPr kinase/phosphorylase (311 aa).

Active-site residues include histidine 139 and lysine 160. 154–161 (GESGVGKS) contacts ATP. Residue serine 161 coordinates Mg(2+). Aspartate 178 (proton acceptor; for phosphorylation activity. Proton donor; for dephosphorylation activity) is an active-site residue. An important for the catalytic mechanism of both phosphorylation and dephosphorylation region spans residues 202–211 (IEIRGIGILD). Glutamate 203 provides a ligand contact to Mg(2+). Residue arginine 244 is part of the active site. The important for the catalytic mechanism of dephosphorylation stretch occupies residues 265–270 (PVRPGR).

This sequence belongs to the HPrK/P family. In terms of assembly, homohexamer. Requires Mg(2+) as cofactor.

It carries out the reaction [HPr protein]-L-serine + ATP = [HPr protein]-O-phospho-L-serine + ADP + H(+). It catalyses the reaction [HPr protein]-O-phospho-L-serine + phosphate + H(+) = [HPr protein]-L-serine + diphosphate. Catalyzes the ATP- as well as the pyrophosphate-dependent phosphorylation of a specific serine residue in HPr, a phosphocarrier protein of the phosphoenolpyruvate-dependent sugar phosphotransferase system (PTS). HprK/P also catalyzes the pyrophosphate-producing, inorganic phosphate-dependent dephosphorylation (phosphorolysis) of seryl-phosphorylated HPr (P-Ser-HPr). The two antagonistic activities of HprK/P are regulated by several intracellular metabolites, which change their concentration in response to the absence or presence of rapidly metabolisable carbon sources (glucose, fructose, etc.) in the growth medium. Therefore, by controlling the phosphorylation state of HPr, HPrK/P is a sensor enzyme that plays a major role in the regulation of carbon metabolism and sugar transport: it mediates carbon catabolite repression (CCR), and regulates PTS-catalyzed carbohydrate uptake and inducer exclusion. The sequence is that of HPr kinase/phosphorylase from Caldicellulosiruptor bescii (strain ATCC BAA-1888 / DSM 6725 / KCTC 15123 / Z-1320) (Anaerocellum thermophilum).